The chain runs to 367 residues: Anhydro-N-acetylmuramic acid kinase (367 aa).

Residue 13–20 (GTSMDGAD) participates in ATP binding.

Belongs to the anhydro-N-acetylmuramic acid kinase family.

It carries out the reaction 1,6-anhydro-N-acetyl-beta-muramate + ATP + H2O = N-acetyl-D-muramate 6-phosphate + ADP + H(+). Its pathway is amino-sugar metabolism; 1,6-anhydro-N-acetylmuramate degradation. The protein operates within cell wall biogenesis; peptidoglycan recycling. In terms of biological role, catalyzes the specific phosphorylation of 1,6-anhydro-N-acetylmuramic acid (anhMurNAc) with the simultaneous cleavage of the 1,6-anhydro ring, generating MurNAc-6-P. Is required for the utilization of anhMurNAc either imported from the medium or derived from its own cell wall murein, and thus plays a role in cell wall recycling. The protein is Anhydro-N-acetylmuramic acid kinase of Neisseria gonorrhoeae (strain ATCC 700825 / FA 1090).